Consider the following 61-residue polypeptide: Small ribosomal subunit protein uS14 (61 aa).

Zn(2+) contacts are provided by Cys24, Cys27, Cys40, and Cys43.

Belongs to the universal ribosomal protein uS14 family. Zinc-binding uS14 subfamily. In terms of assembly, part of the 30S ribosomal subunit. Contacts proteins S3 and S10. Zn(2+) serves as cofactor.

Functionally, binds 16S rRNA, required for the assembly of 30S particles and may also be responsible for determining the conformation of the 16S rRNA at the A site. This chain is Small ribosomal subunit protein uS14, found in Syntrophotalea carbinolica (strain DSM 2380 / NBRC 103641 / GraBd1) (Pelobacter carbinolicus).